Reading from the N-terminus, the 384-residue chain is S-adenosylmethionine synthase (384 aa).

H16 is a binding site for ATP. Residue D18 coordinates Mg(2+). E44 contacts K(+). Positions 57 and 100 each coordinate L-methionine. Residues 100–110 (QSADIAMGVDE) are flexible loop. ATP-binding positions include 165-167 (DAK), D240, 246-247 (RK), A263, and K267. Residue D240 coordinates L-methionine. K271 provides a ligand contact to L-methionine.

Belongs to the AdoMet synthase family. As to quaternary structure, homotetramer; dimer of dimers. Mg(2+) serves as cofactor. The cofactor is K(+).

The protein resides in the cytoplasm. It catalyses the reaction L-methionine + ATP + H2O = S-adenosyl-L-methionine + phosphate + diphosphate. It participates in amino-acid biosynthesis; S-adenosyl-L-methionine biosynthesis; S-adenosyl-L-methionine from L-methionine: step 1/1. In terms of biological role, catalyzes the formation of S-adenosylmethionine (AdoMet) from methionine and ATP. The overall synthetic reaction is composed of two sequential steps, AdoMet formation and the subsequent tripolyphosphate hydrolysis which occurs prior to release of AdoMet from the enzyme. The protein is S-adenosylmethionine synthase of Teredinibacter turnerae (strain ATCC 39867 / T7901).